Consider the following 442-residue polypeptide: 3-phosphoshikimate 1-carboxyvinyltransferase (442 aa).

The 3-phosphoshikimate site is built by K25, S26, and R30. A phosphoenolpyruvate-binding site is contributed by K25. Residues G96 and R124 each coordinate phosphoenolpyruvate. 3-phosphoshikimate-binding residues include S171, S172, Q173, S203, D325, and K352. Q173 is a binding site for phosphoenolpyruvate. D325 acts as the Proton acceptor in catalysis. Residues R356, R400, and K425 each contribute to the phosphoenolpyruvate site.

It belongs to the EPSP synthase family. In terms of assembly, monomer.

The protein localises to the cytoplasm. It carries out the reaction 3-phosphoshikimate + phosphoenolpyruvate = 5-O-(1-carboxyvinyl)-3-phosphoshikimate + phosphate. The protein operates within metabolic intermediate biosynthesis; chorismate biosynthesis; chorismate from D-erythrose 4-phosphate and phosphoenolpyruvate: step 6/7. Catalyzes the transfer of the enolpyruvyl moiety of phosphoenolpyruvate (PEP) to the 5-hydroxyl of shikimate-3-phosphate (S3P) to produce enolpyruvyl shikimate-3-phosphate and inorganic phosphate. This is 3-phosphoshikimate 1-carboxyvinyltransferase from Bordetella bronchiseptica (strain ATCC BAA-588 / NCTC 13252 / RB50) (Alcaligenes bronchisepticus).